A 186-amino-acid chain; its full sequence is Pyridoxal 5'-phosphate synthase subunit PdxT (186 aa).

An L-glutamine-binding site is contributed by Gly47–Ser49. The active-site Nucleophile is Cys79. Residues Arg106 and Ile134–Arg135 contribute to the L-glutamine site. Residues His170 and Glu172 each act as charge relay system in the active site.

Belongs to the glutaminase PdxT/SNO family. In the presence of PdxS, forms a dodecamer of heterodimers. Only shows activity in the heterodimer.

The catalysed reaction is aldehydo-D-ribose 5-phosphate + D-glyceraldehyde 3-phosphate + L-glutamine = pyridoxal 5'-phosphate + L-glutamate + phosphate + 3 H2O + H(+). The enzyme catalyses L-glutamine + H2O = L-glutamate + NH4(+). The protein operates within cofactor biosynthesis; pyridoxal 5'-phosphate biosynthesis. Catalyzes the hydrolysis of glutamine to glutamate and ammonia as part of the biosynthesis of pyridoxal 5'-phosphate. The resulting ammonia molecule is channeled to the active site of PdxS. The sequence is that of Pyridoxal 5'-phosphate synthase subunit PdxT from Methanothrix thermoacetophila (strain DSM 6194 / JCM 14653 / NBRC 101360 / PT) (Methanosaeta thermophila).